Here is a 176-residue protein sequence, read N- to C-terminus: Prenylated Rab acceptor 1 (176 aa).

At methionine 1 the chain carries N-acetylmethionine. Residues 11 to 13 carry the SKL peroxisome targeting motif motif; that stretch reads SRF. Position 18 is a phosphoserine (serine 18). Helical transmembrane passes span 84–104 and 129–149; these read LLTNLLLLFVIVLVVAGIVGI and VCVAVPIGFLASPISTLLWLI.

The protein belongs to the PRA1 family. In terms of assembly, interacts with YIP1 and the Rab GTPases SEC4, YPT1, YPT6, YPT10, YPT11, YPT31, YPT32 and YPT52.

It localises to the golgi apparatus membrane. Its subcellular location is the peroxisome membrane. In Saccharomyces cerevisiae (strain ATCC 204508 / S288c) (Baker's yeast), this protein is Prenylated Rab acceptor 1 (YIP3).